The primary structure comprises 195 residues: Myelin-associated neurite-outgrowth inhibitor (195 aa).

An N-acetylmethionine modification is found at Met-1. The Cytoplasmic segment spans residues 1–18 (MNPVYSPGSSGVPYANAK). Residue Ser-6 is modified to Phosphoserine. The helical transmembrane segment at 19–42 (GIGYPAGFPMGYAAAAPAYSPNMY) threads the bilayer. At 43–142 (PGANPTFQAG…PAPLPPPRGN (100 aa)) the chain is on the extracellular side. Asn-46 is a glycosylation site (N-linked (GlcNAc...) asparagine). A helical membrane pass occupies residues 143–164 (GVTMGMVAGTTMAMSAGTLLTA). Residues 165–195 (HSPTPVAPHPVTVPTYRAPGTPTYSYVPPQW) are Cytoplasmic-facing.

It belongs to the FAM168 family. In terms of assembly, may form homodimers. May interact with DAZAP2, FAM168A, PRDX6, RBM6, TMTC1 and YPEL2. Interacts with CDC27. Post-translationally, N-glycosylated.

The protein resides in the cytoplasm. Its subcellular location is the perinuclear region. The protein localises to the cell membrane. It localises to the cell projection. It is found in the axon. In terms of biological role, inhibitor of neuronal axonal outgrowth. Acts as a negative regulator of CDC42 and STAT3 and a positive regulator of STMN2. Positive regulator of CDC27. The sequence is that of Myelin-associated neurite-outgrowth inhibitor (FAM168B) from Bos taurus (Bovine).